The following is a 563-amino-acid chain: Tripeptidyl-peptidase 1 (563 aa).

Residues 1 to 19 (MGLQARFLGLLALVIAGKC) form the signal peptide. Positions 20–195 (THSPEPDQRW…PEPQGVGPVG (176 aa)) are cleaved as a propeptide — removed in mature form. An intrachain disulfide couples C111 to C122. The Peptidase S53 domain maps to 199–563 (GVTPSVLRQR…PALLKTLLNP (365 aa)). N210 and N222 each carry an N-linked (GlcNAc...) asparagine glycan. Active-site charge relay system residues include E272 and D276. N-linked (GlcNAc...) asparagine glycans are attached at residues N286, N313, and N443. 2 cysteine pairs are disulfide-bonded: C365/C526 and C522/C537. S475 acts as the Charge relay system in catalysis. The Ca(2+) site is built by D517 and V518. Ca(2+)-binding residues include G539, G541, and D543.

In terms of assembly, monomer. Interacts with CLN5. Interacts with CLN3. Ca(2+) is required as a cofactor. Post-translationally, activated by autocatalytic proteolytical processing upon acidification. N-glycosylation is required for processing and activity.

The protein localises to the lysosome. The protein resides in the melanosome. The catalysed reaction is Release of an N-terminal tripeptide from a polypeptide, but also has endopeptidase activity.. Lysosomal serine protease with tripeptidyl-peptidase I activity. May act as a non-specific lysosomal peptidase which generates tripeptides from the breakdown products produced by lysosomal proteinases. Requires substrates with an unsubstituted N-terminus. This chain is Tripeptidyl-peptidase 1 (Tpp1), found in Rattus norvegicus (Rat).